A 703-amino-acid polypeptide reads, in one-letter code: NADH-quinone oxidoreductase chain 12 (703 aa).

A run of 16 helical transmembrane segments spans residues 4–24, 30–50, 79–99, 116–136, 138–158, 179–199, 224–244, 256–276, 290–310, 325–345, 346–366, 381–401, 415–435, 475–495, 580–600, and 679–699; these read FVLF…RAIG, YLTT…FLSF, LTAI…MYSL, ARFF…VTAD, LLQM…LIGF, GDFG…SVQF, ANLL…QLLL, TPVS…FLVC, NFIV…GLVQ, LGYM…FHLL, THAF…HAMH, IPLT…VGIP, AIIE…VIAA, LGVL…PFFG, VSPF…YIAN, and LFHY…WVMM.

The protein belongs to the complex I subunit 5 family. NDH-1 is composed of at least 14 different subunits, Nqo1 to Nqo14. The complex has a L-shaped structure, with the hydrophobic arm (subunits Nqo7, Nqo8, Nqo10 to Nqo14) embedded in the inner membrane and the hydrophilic peripheral arm (subunits Nqo1 to Nqo6, Nqo9) protruding into the bacterial cytoplasm. The hydrophilic domain contains all the redox centers.

The protein resides in the cell inner membrane. The enzyme catalyses a quinone + NADH + 5 H(+)(in) = a quinol + NAD(+) + 4 H(+)(out). In terms of biological role, NDH-1 shuttles electrons from NADH, via FMN and iron-sulfur (Fe-S) centers, to quinones in the respiratory chain. The immediate electron acceptor for the enzyme in this species is believed to be ubiquinone. Couples the redox reaction to proton translocation (for every two electrons transferred, four hydrogen ions are translocated across the cytoplasmic membrane), and thus conserves the redox energy in a proton gradient. The protein is NADH-quinone oxidoreductase chain 12 of Paracoccus denitrificans.